A 641-amino-acid polypeptide reads, in one-letter code: Lipase (641 aa).

The N-terminal stretch at 1–38 (MKETKHQHTFSIRKSAYGAASVMVASCIFVIGGGVAEA) is a signal peptide. Disordered regions lie at residues 41 to 174 (STTQ…PSVD) and 206 to 246 (TVSP…KPTV). Low complexity predominate over residues 53-64 (QTSQQETHTHQT). Basic and acidic residues predominate over residues 73 to 94 (TPEHVDDSKEATPLPEKAESPK). Polar residues-rich tracts occupy residues 95-106 (TEVTVQPSSHTQ) and 127-139 (PEST…VESN). A compositionally biased stretch (basic and acidic residues) spans 140–165 (KATENEMSPVEHHASNVEKREDRLET). Positions 227–239 (ENTTAQNKFTSQA) are enriched in polar residues. Serine 369 acts as the Nucleophile in catalysis. Glycine 535 contributes to the Ca(2+) binding site. Catalysis depends on aspartate 559, which acts as the Charge relay system. Position 599 (aspartate 599) interacts with Ca(2+). The active-site Charge relay system is the histidine 600. The Ca(2+) site is built by aspartate 602, aspartate 607, and aspartate 610.

It belongs to the AB hydrolase superfamily. Lipase family. It depends on Ca(2+) as a cofactor.

The protein resides in the secreted. It carries out the reaction a triacylglycerol + H2O = a diacylglycerol + a fatty acid + H(+). It catalyses the reaction a 1,2-diacyl-sn-glycero-3-phosphocholine + H2O = a 2-acyl-sn-glycero-3-phosphocholine + a fatty acid + H(+). In terms of biological role, has a broad substrate specificity hydrolyzing a variety of triglycerides and phosphatidylcholines. In Staphylococcus hyicus, this protein is Lipase (lip).